The sequence spans 276 residues: MSDHADTLLGKDTTYPEHYDPALLQPIPRERSRETMVRGDLPFTGVDIWTAYELSWLDSSGKPHVAVGEFWVPADSSAIIESKSLKYYLNSLNQHRFATREQARQAIAGDLSEAAGGEVQVTLFDIDDYSNVGTLPGTCVDTLDAPVYVYQPDASLLKFVDQPGEQQQLFSHLLKSNCPVTGQPDWATVWVQCSGLTLVPESFLAYVVSFRGHQDFHENCVERIFTDLMAGGKLQDLAVYARYTRRGGLDINPLRFSGAQDPEALEQLVSKRIARQ.

80-82 is a substrate binding site; sequence IES. Residue 82–83 coordinates NADPH; it reads SK. Cys-178 functions as the Thioimide intermediate in the catalytic mechanism. The Proton donor role is filled by Asp-185. 217–218 is a binding site for substrate; it reads HE. 246-247 is a binding site for NADPH; it reads RG.

The protein belongs to the GTP cyclohydrolase I family. QueF type 2 subfamily. Homodimer.

The protein localises to the cytoplasm. The catalysed reaction is 7-aminomethyl-7-carbaguanine + 2 NADP(+) = 7-cyano-7-deazaguanine + 2 NADPH + 3 H(+). It participates in tRNA modification; tRNA-queuosine biosynthesis. Its function is as follows. Catalyzes the NADPH-dependent reduction of 7-cyano-7-deazaguanine (preQ0) to 7-aminomethyl-7-deazaguanine (preQ1). The protein is NADPH-dependent 7-cyano-7-deazaguanine reductase of Teredinibacter turnerae (strain ATCC 39867 / T7901).